The following is a 497-amino-acid chain: Probable cytosol aminopeptidase (497 aa).

Mn(2+) contacts are provided by Lys-263 and Asp-268. Residue Lys-275 is part of the active site. Residues Asp-286, Asp-345, and Glu-347 each contribute to the Mn(2+) site. The active site involves Arg-349.

Belongs to the peptidase M17 family. Mn(2+) serves as cofactor.

Its subcellular location is the cytoplasm. The enzyme catalyses Release of an N-terminal amino acid, Xaa-|-Yaa-, in which Xaa is preferably Leu, but may be other amino acids including Pro although not Arg or Lys, and Yaa may be Pro. Amino acid amides and methyl esters are also readily hydrolyzed, but rates on arylamides are exceedingly low.. It carries out the reaction Release of an N-terminal amino acid, preferentially leucine, but not glutamic or aspartic acids.. In terms of biological role, presumably involved in the processing and regular turnover of intracellular proteins. Catalyzes the removal of unsubstituted N-terminal amino acids from various peptides. This is Probable cytosol aminopeptidase from Allorhizobium ampelinum (strain ATCC BAA-846 / DSM 112012 / S4) (Agrobacterium vitis (strain S4)).